Consider the following 211-residue polypeptide: Transcription antitermination protein NusB (211 aa).

Residues 152–211 form a disordered region; it reads PAKKERVANPFPSTPPKKPENVPNPFSTPFKKNSSEPIRNPFEGNKSPQPPQKTLRRKKK. The segment covering 175-188 has biased composition (polar residues); that stretch reads NPFSTPFKKNSSEP.

Belongs to the NusB family.

Its function is as follows. Involved in transcription antitermination. Required for transcription of ribosomal RNA (rRNA) genes. Binds specifically to the boxA antiterminator sequence of the ribosomal RNA (rrn) operons. The protein is Transcription antitermination protein NusB of Chloroherpeton thalassium (strain ATCC 35110 / GB-78).